We begin with the raw amino-acid sequence, 657 residues long: tRNA 5-methylaminomethyl-2-thiouridine biosynthesis bifunctional protein MnmC (657 aa).

The tract at residues 1–238 is tRNA (mnm(5)s(2)U34)-methyltransferase; it reads MPASTLLQHA…KWEVMSGEYT (238 aa). Residues 265–657 are FAD-dependent cmnm(5)s(2)U34 oxidoreductase; sequence IGAGLAGSAS…FGLRRLIRGK (393 aa).

In the N-terminal section; belongs to the methyltransferase superfamily. tRNA (mnm(5)s(2)U34)-methyltransferase family. The protein in the C-terminal section; belongs to the DAO family. It depends on FAD as a cofactor.

The protein resides in the cytoplasm. It carries out the reaction 5-aminomethyl-2-thiouridine(34) in tRNA + S-adenosyl-L-methionine = 5-methylaminomethyl-2-thiouridine(34) in tRNA + S-adenosyl-L-homocysteine + H(+). Catalyzes the last two steps in the biosynthesis of 5-methylaminomethyl-2-thiouridine (mnm(5)s(2)U) at the wobble position (U34) in tRNA. Catalyzes the FAD-dependent demodification of cmnm(5)s(2)U34 to nm(5)s(2)U34, followed by the transfer of a methyl group from S-adenosyl-L-methionine to nm(5)s(2)U34, to form mnm(5)s(2)U34. In Pseudomonas putida (strain W619), this protein is tRNA 5-methylaminomethyl-2-thiouridine biosynthesis bifunctional protein MnmC.